Reading from the N-terminus, the 237-residue chain is MSLPNPDNRPLLIGPPTGPEAPFPFRMEGEVISGFGRGSKELGIPTANLPVDDENAWIKNIDSGIYFGWASLKLPASHPNSVLYQKPPTSEPVMMDPVQQQQQQQQQQRNQQQQQEGGVGSAQQEKLVDQETGQWQIYPMVMSIGYNPFYKNTVRSAEVHVLGEFAADFYGVGMRLLITGFIRNEKDYSGLEALIADIHFDCEVARHSLARKGWRVRELGVKEGEEEGELDGSWLVR.

The segment at 1 to 23 (MSLPNPDNRPLLIGPPTGPEAPF) is disordered. Mg(2+) is bound by residues Thr46 and Asn48. The interval 82-126 (VLYQKPPTSEPVMMDPVQQQQQQQQQQRNQQQQQEGGVGSAQQEK) is disordered. Low complexity predominate over residues 99-115 (QQQQQQQQQQRNQQQQQ). Glu158 serves as the catalytic Nucleophile.

The protein belongs to the flavokinase family. The cofactor is Zn(2+). Mg(2+) serves as cofactor.

The enzyme catalyses riboflavin + ATP = FMN + ADP + H(+). It participates in cofactor biosynthesis; FMN biosynthesis; FMN from riboflavin (ATP route): step 1/1. Functionally, catalyzes the phosphorylation of riboflavin (vitamin B2) to form flavin mononucleotide (FMN) coenzyme. This Neurospora crassa (strain ATCC 24698 / 74-OR23-1A / CBS 708.71 / DSM 1257 / FGSC 987) protein is Riboflavin kinase (fmn1).